Consider the following 677-residue polypeptide: O-fucosyltransferase 27 (677 aa).

The helical; Signal-anchor for type II membrane protein transmembrane segment at 15-35 (WIGLLGLVLSAFSLLVHFLLA) threads the bilayer. Asn130 is a glycosylation site (N-linked (GlcNAc...) asparagine). The segment at 410–437 (PPSIEVETKHDSLKSTRQRPQPLPPPPA) is disordered. 2 N-linked (GlcNAc...) asparagine glycosylation sites follow: Asn542 and Asn592. The interval 619–677 (NAEKEEDLDEEDLSSSGLFFGHKESGGNNNGNNETVNSEANNKEEGQLEDQEELEGSER) is disordered. A compositionally biased stretch (acidic residues) spans 622–631 (KEEDLDEEDL). A compositionally biased stretch (low complexity) spans 644–658 (GGNNNGNNETVNSEA). The N-linked (GlcNAc...) asparagine glycan is linked to Asn651. The segment covering 665 to 677 (QLEDQEELEGSER) has biased composition (acidic residues).

The protein belongs to the glycosyltransferase GT106 family.

It is found in the membrane. Its pathway is glycan metabolism. This chain is O-fucosyltransferase 27, found in Arabidopsis thaliana (Mouse-ear cress).